Reading from the N-terminus, the 159-residue chain is Globin C, coelomic (159 aa).

G2 carries the N-acetylglycine modification. In terms of domain architecture, Globin spans 12–158 (DLTLAQKKIV…VQAVLLVKHG (147 aa)). Residues H74 and H105 each contribute to the heme b site.

This sequence belongs to the globin family. In terms of assembly, monomer.

The chain is Globin C, coelomic from Molpadia arenicola (Sea cucumber).